Here is a 95-residue protein sequence, read N- to C-terminus: Aspartyl/glutamyl-tRNA(Asn/Gln) amidotransferase subunit C (95 aa).

Belongs to the GatC family. As to quaternary structure, heterotrimer of A, B and C subunits.

The catalysed reaction is L-glutamyl-tRNA(Gln) + L-glutamine + ATP + H2O = L-glutaminyl-tRNA(Gln) + L-glutamate + ADP + phosphate + H(+). It carries out the reaction L-aspartyl-tRNA(Asn) + L-glutamine + ATP + H2O = L-asparaginyl-tRNA(Asn) + L-glutamate + ADP + phosphate + 2 H(+). In terms of biological role, allows the formation of correctly charged Asn-tRNA(Asn) or Gln-tRNA(Gln) through the transamidation of misacylated Asp-tRNA(Asn) or Glu-tRNA(Gln) in organisms which lack either or both of asparaginyl-tRNA or glutaminyl-tRNA synthetases. The reaction takes place in the presence of glutamine and ATP through an activated phospho-Asp-tRNA(Asn) or phospho-Glu-tRNA(Gln). The sequence is that of Aspartyl/glutamyl-tRNA(Asn/Gln) amidotransferase subunit C from Acidithiobacillus ferrooxidans (strain ATCC 23270 / DSM 14882 / CIP 104768 / NCIMB 8455) (Ferrobacillus ferrooxidans (strain ATCC 23270)).